The primary structure comprises 274 residues: 4-diphosphocytidyl-2-C-methyl-D-erythritol kinase (274 aa).

Residue Lys-8 is part of the active site. 94–104 contacts ATP; that stretch reads PSGAGLGGGSS. The active site involves Asp-136.

It belongs to the GHMP kinase family. IspE subfamily.

It catalyses the reaction 4-CDP-2-C-methyl-D-erythritol + ATP = 4-CDP-2-C-methyl-D-erythritol 2-phosphate + ADP + H(+). Its pathway is isoprenoid biosynthesis; isopentenyl diphosphate biosynthesis via DXP pathway; isopentenyl diphosphate from 1-deoxy-D-xylulose 5-phosphate: step 3/6. Catalyzes the phosphorylation of the position 2 hydroxy group of 4-diphosphocytidyl-2C-methyl-D-erythritol. The sequence is that of 4-diphosphocytidyl-2-C-methyl-D-erythritol kinase from Bacteroides thetaiotaomicron (strain ATCC 29148 / DSM 2079 / JCM 5827 / CCUG 10774 / NCTC 10582 / VPI-5482 / E50).